We begin with the raw amino-acid sequence, 167 residues long: Transcription factor 24 (167 aa).

The span at 1–23 (MDRGRPAGSPLSASAEPAPLAAA) shows a compositional bias: low complexity. The tract at residues 1-60 (MDRGRPAGSPLSASAEPAPLAAAIRDSRPGRTGPGPAGPGGGSRSGSGRPAAANAARERS) is disordered. Residues 32-45 (TGPGPAGPGGGSRS) are compositionally biased toward gly residues. Residues 46-55 (GSGRPAAANA) show a composition bias toward low complexity. The bHLH domain occupies 49 to 101 (RPAAANAARERSRVQTLRHAFLELQRTLPSVPPDTKLSKLDVLLLATTYIAHL).

In terms of assembly, efficient DNA binding requires dimerization with another bHLH protein.

It localises to the nucleus. Functionally, putative transcription factor. The protein is Transcription factor 24 (TCF24) of Homo sapiens (Human).